Reading from the N-terminus, the 385-residue chain is GPN-loop GTPase 1 (385 aa).

13–18 (GSGKTT) contributes to the GTP binding site. Residues 70–72 (GPN) carry the Gly-Pro-Asn (GPN)-loop; involved in dimer interface motif. 173 to 176 (NKTD) is a binding site for GTP. 3 positions are modified to phosphoserine: Ser304, Ser308, and Ser313. Residues 317–332 (EDANDGLVDRDEDEGV) show a composition bias toward acidic residues. The disordered stretch occupies residues 317–356 (EDANDGLVDRDEDEGVEREYTFPGEERTKGEVNENSAPDL). Residues 333 to 348 (EREYTFPGEERTKGEV) are compositionally biased toward basic and acidic residues. Ser352 is subject to Phosphoserine. A Glycyl lysine isopeptide (Lys-Gly) (interchain with G-Cter in ubiquitin) cross-link involves residue Lys369.

It belongs to the GPN-loop GTPase family. Heterodimers with GPN2 or GPN3. Binds to RNA polymerase II (RNAPII) in a GTP-dependent manner. Interacts with nuclear pore protein NUP133 and nuclear export factor CRM1. Interacts with PCL1. Post-translationally, phosphorylated by the cyclin-CDK PCL1-PHO85.

The protein resides in the cytoplasm. In terms of biological role, small GTPase required for proper nuclear import of RNA polymerase II (RNAPII). May act at an RNAP assembly step prior to nuclear import. Promotes sister chromatid separation during anaphase. The polypeptide is GPN-loop GTPase 1 (Saccharomyces cerevisiae (strain ATCC 204508 / S288c) (Baker's yeast)).